Reading from the N-terminus, the 76-residue chain is MAYICAXTLAFLLCVNTGIIQAEDKEYVSSEHMEFRESCIPQDGECDRMADACCPGLQCLGCNPLAAHDTGHCKCQ.

Positions 1 to 22 are cleaved as a signal peptide; sequence MAYICAXTLAFLLCVNTGIIQA.

The protein belongs to the scoloptoxin-13 family. Contains 4 disulfide bonds. In terms of tissue distribution, expressed by the venom gland.

It is found in the secreted. The sequence is that of U-scoloptoxin(13)-Sm1a from Scolopendra morsitans (Tanzanian blue ringleg centipede).